We begin with the raw amino-acid sequence, 107 residues long: Potassium voltage-gated channel subfamily E member 3 (107 aa).

Residues N5, N22, and N45 are each glycosylated (N-linked (GlcNAc...) asparagine). The segment at 31-54 is disordered; the sequence is CRPGPGPGSGTGPDNQTEDHRASL. Residues 61–81 form a helical membrane-spanning segment; it reads SYMYILFVMFLFAVTVGSLIL. Residues 72-83 are interaction with KCNQ1; sequence FAVTVGSLILGY. Residues 82–103 lie on the Cytoplasmic side of the membrane; the sequence is GYTRSRKVDKRSDPYHVYIKNR.

The protein belongs to the potassium channel KCNE family. In terms of assembly, interacts with KCNB1. Interacts with KCNC2. Associates with KCNC4/Kv3.4. Interacts with KCNQ1; associates with a KCNQ1:KCNE3 stoichiometry of 4:4; produces a current with nearly instantaneous activation with a linear current-voltage relationship and alters membrane raft localization; affects KCNQ1 structure and gating properties.

The protein resides in the cell membrane. Its subcellular location is the cytoplasm. It localises to the perikaryon. The protein localises to the cell projection. It is found in the dendrite. The protein resides in the membrane raft. In terms of biological role, ancillary protein that functions as a regulatory subunit of the voltage-gated potassium (Kv) channel complex composed of pore-forming and potassium-conducting alpha subunits and of regulatory beta subunits. KCNE3 beta subunit modulates the gating kinetics and enhances stability of the channel complex. Alters the gating of the delayed rectifier Kv channel containing KCNB1 alpha subunit. Associates with KCNC4/Kv3.4 alpha subunit to form the subthreshold Kv channel in skeletal muscle and to establish the resting membrane potential (RMP) in muscle cells. Association with KCNQ1/KCLQT1 alpha subunit may form the intestinal cAMP-stimulated potassium channel involved in chloride secretion that produces a current with nearly instantaneous activation with a linear current-voltage relationship. The chain is Potassium voltage-gated channel subfamily E member 3 from Rattus norvegicus (Rat).